The chain runs to 314 residues: Glucocorticoid receptor (314 aa).

Positions 1 to 44 are disordered; sequence ASAAVSAAPTEKEFPKTHSDVSSEQQNLKGQKGSNGGSMKLHTT. The interval 1–281 is modulating; sequence ASAAVSAAPT…SAATGPPPKL (281 aa). Over residues 10-21 the composition is skewed to basic and acidic residues; that stretch reads TEKEFPKTHSDV. Ser65, Ser73, and Ser88 each carry phosphoserine. Lys120 participates in a covalent cross-link: Glycyl lysine isopeptide (Lys-Gly) (interchain with G-Cter in SUMO2). A Phosphoserine modification is found at Ser129. Residues Lys139 and Lys155 each participate in a glycyl lysine isopeptide (Lys-Gly) (interchain with G-Cter in SUMO); alternate cross-link. Glycyl lysine isopeptide (Lys-Gly) (interchain with G-Cter in SUMO2); alternate cross-links involve residues Lys139 and Lys155. Ser266 is subject to Phosphoserine. Residue Lys280 forms a Glycyl lysine isopeptide (Lys-Gly) (interchain with G-Cter in ubiquitin) linkage. The segment at 282-314 adopts an NR C4-type zinc-finger fold; the sequence is CLVCSDEASGCHYGVLTCGSCKVFFKRAVEGQH. Residues 282–314 constitute a DNA-binding region (nuclear receptor); it reads CLVCSDEASGCHYGVLTCGSCKVFFKRAVEGQH.

Belongs to the nuclear hormone receptor family. NR3 subfamily. Heteromultimeric cytoplasmic complex with HSP90AA1, HSPA1A/HSPA1B, and FKBP5 or another immunophilin such as PPID, STIP1, or the immunophilin homolog PPP5C. Upon ligand binding FKBP5 dissociates from the complex and FKBP4 takes its place, thereby linking the complex to dynein and mediating transport to the nucleus, where the complex dissociates. Probably forms a complex composed of chaperones HSP90 and HSP70, co-chaperones CDC37, PPP5C, TSC1 and client protein TSC2, CDK4, AKT, RAF1 and NR3C1; this complex does not contain co-chaperones STIP1/HOP and PTGES3/p23. Directly interacts with UNC45A. Binds to DNA as a homodimer, and as heterodimer with NR3C2 or the retinoid X receptor. Binds STAT5A and STAT5B homodimers and heterodimers. Interacts with NRIP1, POU2F1, POU2F2 and TRIM28. Interacts with several coactivator complexes, including the SMARCA4 complex, CREBBP/EP300, TADA2L (Ada complex) and p160 coactivators such as NCOA2 and NCOA6. Interaction with BAG1 inhibits transactivation. Interacts with HEXIM1 and TGFB1I1. Interacts with NCOA1. Interacts with NCOA3, SMARCA4, SMARCC1, SMARCD1, and SMARCE1. Interacts with CLOCK, CRY1 and CRY2 in a ligand-dependent fashion. Interacts with CIART. Interacts with RWDD3. Interacts with UBE2I/UBC9 and this interaction is enhanced in the presence of RWDD3. Interacts with GRIP1. Interacts with NR4A3 (via nuclear receptor DNA-binding domain), represses transcription activity of NR4A3 on the POMC promoter Nur response element (NurRE). Directly interacts with PNRC2 to attract and form a complex with UPF1 and DCP1A; the interaction leads to rapid mRNA degradation. Interacts with GSK3B. Interacts with FNIP1 and FNIP2. Interacts (via C-terminus) with HNRNPU (via C-terminus). Interacts with MCM3AP. Interacts (via domain NR LBD) with HSP90AA1 and HSP90AB1. In the absence of hormonal ligand, interacts with TACC1. Interacts (via NR LBD domain) with ZNF764 (via KRAB domain); the interaction regulates transcription factor activity of NR3C1 by directing its actions toward certain biologic pathways. Post-translationally, acetylation by CLOCK reduces its binding to glucocorticoid response elements and its transcriptional activity. Increased proteasome-mediated degradation in response to glucocorticoids. In terms of processing, phosphorylated in the absence of hormone; becomes hyperphosphorylated in the presence of glucocorticoid. The Ser-65, Ser-88 and Ser-266-phosphorylated forms are mainly cytoplasmic, and the Ser-73-phosphorylated form is nuclear. Phosphorylation at Ser-73 increases transcriptional activity. Phosphorylation at Ser-65, Ser-88 and Ser-266 decreases signaling capacity. Phosphorylation at Ser-266 may protect from glucocorticoid-induced apoptosis. Phosphorylation at Ser-65 and Ser-73 is not required in regulation of chromosome segregation. May be dephosphorylated by PPP5C, attenuates NR3C1 action. Post-translationally, ubiquitinated by UBR5, leading to its degradation: UBR5 specifically recognizes and binds ligand-bound NR3C1 when it is not associated with coactivators (NCOAs). In presence of NCOAs, the UBR5-degron is not accessible, preventing its ubiquitination and degradation. Sumoylation at Lys-139 and Lys-155 negatively regulates its transcriptional activity. Heat shock increases sumoylation in a RWDD3-dependent manner.

It is found in the cytoplasm. The protein resides in the nucleus. The protein localises to the mitochondrion. It localises to the cytoskeleton. Its subcellular location is the spindle. It is found in the microtubule organizing center. The protein resides in the centrosome. The protein localises to the chromosome. It localises to the nucleoplasm. Functionally, receptor for glucocorticoids (GC). Has a dual mode of action: as a transcription factor that binds to glucocorticoid response elements (GRE), both for nuclear and mitochondrial DNA, and as a modulator of other transcription factors. Affects inflammatory responses, cellular proliferation and differentiation in target tissues. Involved in chromatin remodeling. Plays a role in rapid mRNA degradation by binding to the 5' UTR of target mRNAs and interacting with PNRC2 in a ligand-dependent manner which recruits the RNA helicase UPF1 and the mRNA-decapping enzyme DCP1A, leading to RNA decay. Could act as a coactivator for STAT5-dependent transcription upon growth hormone (GH) stimulation and could reveal an essential role of hepatic GR in the control of body growth. Mediates glucocorticoid-induced apoptosis. Promotes accurate chromosome segregation during mitosis. May act as a tumor suppressor. May play a negative role in adipogenesis through the regulation of lipolytic and antilipogenic gene expression. This chain is Glucocorticoid receptor (NR3C1), found in Ovis aries (Sheep).